Reading from the N-terminus, the 169-residue chain is Crossover junction endodeoxyribonuclease RuvC (169 aa).

Residues aspartate 15, glutamate 75, and aspartate 147 contribute to the active site. Positions 15, 75, and 147 each coordinate Mg(2+).

Belongs to the RuvC family. In terms of assembly, homodimer which binds Holliday junction (HJ) DNA. The HJ becomes 2-fold symmetrical on binding to RuvC with unstacked arms; it has a different conformation from HJ DNA in complex with RuvA. In the full resolvosome a probable DNA-RuvA(4)-RuvB(12)-RuvC(2) complex forms which resolves the HJ. It depends on Mg(2+) as a cofactor.

The protein resides in the cytoplasm. The enzyme catalyses Endonucleolytic cleavage at a junction such as a reciprocal single-stranded crossover between two homologous DNA duplexes (Holliday junction).. Its function is as follows. The RuvA-RuvB-RuvC complex processes Holliday junction (HJ) DNA during genetic recombination and DNA repair. Endonuclease that resolves HJ intermediates. Cleaves cruciform DNA by making single-stranded nicks across the HJ at symmetrical positions within the homologous arms, yielding a 5'-phosphate and a 3'-hydroxyl group; requires a central core of homology in the junction. The consensus cleavage sequence is 5'-(A/T)TT(C/G)-3'. Cleavage occurs on the 3'-side of the TT dinucleotide at the point of strand exchange. HJ branch migration catalyzed by RuvA-RuvB allows RuvC to scan DNA until it finds its consensus sequence, where it cleaves and resolves the cruciform DNA. In Caulobacter vibrioides (strain ATCC 19089 / CIP 103742 / CB 15) (Caulobacter crescentus), this protein is Crossover junction endodeoxyribonuclease RuvC.